A 206-amino-acid polypeptide reads, in one-letter code: Pyridoxine/pyridoxamine 5'-phosphate oxidase (206 aa).

FMN contacts are provided by residues 53 to 58, 68 to 69, lysine 75, and glutamine 97; these read RMVLLK and YT. A substrate-binding site is contributed by lysine 58. 3 residues coordinate substrate: tyrosine 115, arginine 119, and serine 123. FMN contacts are provided by residues 132–133 and tryptophan 177; that span reads QS. Residue 183–185 participates in substrate binding; that stretch reads RLH. FMN is bound at residue arginine 187.

Belongs to the pyridoxamine 5'-phosphate oxidase family. As to quaternary structure, homodimer. The cofactor is FMN.

The enzyme catalyses pyridoxamine 5'-phosphate + O2 + H2O = pyridoxal 5'-phosphate + H2O2 + NH4(+). The catalysed reaction is pyridoxine 5'-phosphate + O2 = pyridoxal 5'-phosphate + H2O2. It participates in cofactor metabolism; pyridoxal 5'-phosphate salvage; pyridoxal 5'-phosphate from pyridoxamine 5'-phosphate: step 1/1. The protein operates within cofactor metabolism; pyridoxal 5'-phosphate salvage; pyridoxal 5'-phosphate from pyridoxine 5'-phosphate: step 1/1. Catalyzes the oxidation of either pyridoxine 5'-phosphate (PNP) or pyridoxamine 5'-phosphate (PMP) into pyridoxal 5'-phosphate (PLP). The sequence is that of Pyridoxine/pyridoxamine 5'-phosphate oxidase from Sinorhizobium fredii (strain NBRC 101917 / NGR234).